The sequence spans 554 residues: Glucose-6-phosphate isomerase (554 aa).

Glu-359 (proton donor) is an active-site residue. Active-site residues include His-390 and Lys-518.

This sequence belongs to the GPI family.

The protein resides in the cytoplasm. It catalyses the reaction alpha-D-glucose 6-phosphate = beta-D-fructose 6-phosphate. It participates in carbohydrate biosynthesis; gluconeogenesis. It functions in the pathway carbohydrate degradation; glycolysis; D-glyceraldehyde 3-phosphate and glycerone phosphate from D-glucose: step 2/4. Functionally, catalyzes the reversible isomerization of glucose-6-phosphate to fructose-6-phosphate. The polypeptide is Glucose-6-phosphate isomerase (Pseudomonas syringae pv. tomato (strain ATCC BAA-871 / DC3000)).